A 355-amino-acid chain; its full sequence is Peptide chain release factor 1 (355 aa).

Glutamine 231 carries the N5-methylglutamine modification. The span at 283–292 shows a compositional bias: basic and acidic residues; sequence IAKETSERKS. The interval 283–303 is disordered; sequence IAKETSERKSQVGTGDRSGRI.

Belongs to the prokaryotic/mitochondrial release factor family. Methylated by PrmC. Methylation increases the termination efficiency of RF1.

It is found in the cytoplasm. Functionally, peptide chain release factor 1 directs the termination of translation in response to the peptide chain termination codons UAG and UAA. The chain is Peptide chain release factor 1 from Campylobacter curvus (strain 525.92).